We begin with the raw amino-acid sequence, 1020 residues long: MGRGAGREYSPAATTAENGGGKKKQKEKELDELKKEVAMDDHKLSLDELGRKYQVDLSKGLTNQRAQDILARDGPNALTPPPTTPEWVKFCRQLFGGFSILLWIGALLCFLAYGILAAMEDEPSNDNLYLGIVLAAVVIVTGCFSYYQEAKSSKIMDSFKNMVPQQALVIREGEKMQINAEEVVVGDLVEVKGGDRVPADLRIISSHGCKVDNSSLTGESEPQTRSPEFTHENPLETRNICFFSTNCVEGTARGIVIATGDRTVMGRIATLASGLEVGQTPIAMEIEHFIQLITGVAVFLGVSFFVLSLILGYSWLEAVIFLIGIIVANVPEGLLATVTVCLTLTAKRMARKNCLVKNLEAVETLGSTSTICSDKTGTLTQNRMTVAHMWFDNQIHEADTTEDQSGATFDKRSPTWTALSRIAGLCNRAVFKAGQENISVSKRDTAGDASESALLKCIELSCGSVRKMRDRNPKVAEIPFNSTNKYQLSIHEREDSPQSHVLVMKGAPERILDRCSTILVQGKEIPLDKEMQDAFQNAYMELGGLGERVLGFCQLNLPSGKFPRGFKFDTDELNFPTEKLCFVGLMSMIDPPRAAVPDAVGKCRSAGIKVIMVTGDHPITAKAIAKGVGIISEGNETVEDIAARLNIPVSQVNPREAKACVVHGSDLKDMTSEQLDEILRDHTEIVFARTSPQQKLIIVEGCQRQGAIVAVTGDGVNDSPALKKADIGIAMGISGSDVSKQAADMILLDDNFASIVTGVEEGRLIFDNLKKSIAYTLTSNIPEITPFLLFIIANIPLPLGTVTILCIDLGTDMVPAISLAYEAAESDIMKRQPRNSQTDKLVNERLISMAYGQIGMIQALGGFFTYFVILAENGFLPSRLLGIRLDWDDRTTNDLEDSYGQEWTYEQRKVVEFTCHTAFFASIVVVQWADLIICKTRRNSVFQQGMKNKILIFGLLEETALAAFLSYCPGMGVALRMYPLKVTWWFCAFPYSLLIFIYDEVRKLILRRYPGGWVEKETYY.

A propeptide spanning residues 1 to 5 (MGRGA) is cleaved from the precursor. Residues 1 to 31 (MGRGAGREYSPAATTAENGGGKKKQKEKELD) are disordered. At 6–85 (GREYSPAATT…NALTPPPTTP (80 aa)) the chain is on the cytoplasmic side. Ser10 carries the post-translational modification Phosphoserine. The interaction with phosphoinositide-3 kinase stretch occupies residues 80-82 (PPP). The chain crosses the membrane as a helical span at residues 86 to 106 (EWVKFCRQLFGGFSILLWIGA). At 107-129 (LLCFLAYGILAAMEDEPSNDNLY) the chain is on the extracellular side. A helical membrane pass occupies residues 130–150 (LGIVLAAVVIVTGCFSYYQEA). Over 151–286 (KSSKIMDSFK…VGQTPIAMEI (136 aa)) the chain is Cytoplasmic. Polar residues predominate over residues 212–227 (DNSSLTGESEPQTRSP). The interval 212–231 (DNSSLTGESEPQTRSPEFTH) is disordered. Residues 287 to 306 (EHFIQLITGVAVFLGVSFFV) form a helical membrane-spanning segment. Residues 307-318 (LSLILGYSWLEA) lie on the Extracellular side of the membrane. The chain crosses the membrane as a helical span at residues 319 to 336 (VIFLIGIIVANVPEGLLA). Residues 337-769 (TVTVCLTLTA…EEGRLIFDNL (433 aa)) lie on the Cytoplasmic side of the membrane. Catalysis depends on Asp374, which acts as the 4-aspartylphosphate intermediate. Phosphoserine is present on residues Ser439, Ser450, Ser496, and Ser559. Residue Thr570 is modified to Phosphothreonine. Residues Ser587 and Ser672 each carry the phosphoserine modification. Mg(2+) is bound by residues Asp714 and Asp718. Residues 770–789 (KKSIAYTLTSNIPEITPFLL) traverse the membrane as a helical segment. The Extracellular segment spans residues 790–799 (FIIANIPLPL). A helical membrane pass occupies residues 800–820 (GTVTILCIDLGTDMVPAISLA). The Cytoplasmic portion of the chain corresponds to 821–840 (YEAAESDIMKRQPRNSQTDK). The residue at position 826 (Ser826) is a Phosphoserine. The helical transmembrane segment at 841 to 863 (LVNERLISMAYGQIGMIQALGGF) threads the bilayer. Residues 864 to 915 (FTYFVILAENGFLPSRLLGIRLDWDDRTTNDLEDSYGQEWTYEQRKVVEFTC) are Extracellular-facing. A helical transmembrane segment spans residues 916–935 (HTAFFASIVVVQWADLIICK). Residues 936 to 948 (TRRNSVFQQGMKN) lie on the Cytoplasmic side of the membrane. Ser940 is subject to Phosphoserine; by PKA. Residues 949 to 967 (KILIFGLLEETALAAFLSY) form a helical membrane-spanning segment. Residues 968-982 (CPGMGVALRMYPLKV) lie on the Extracellular side of the membrane. The helical transmembrane segment at 983–1003 (TWWFCAFPYSLLIFIYDEVRK) threads the bilayer. Residues 1004-1020 (LILRRYPGGWVEKETYY) are Cytoplasmic-facing.

Belongs to the cation transport ATPase (P-type) (TC 3.A.3) family. Type IIC subfamily. The sodium/potassium-transporting ATPase is composed of a catalytic alpha subunit, an auxiliary non-catalytic beta subunit and an additional regulatory subunit. Interacts with regulatory subunit FXYD1.

It is found in the membrane. The protein localises to the cell membrane. It catalyses the reaction K(+)(out) + Na(+)(in) + ATP + H2O = K(+)(in) + Na(+)(out) + ADP + phosphate + H(+). Its function is as follows. This is the catalytic component of the active enzyme, which catalyzes the hydrolysis of ATP coupled with the exchange of sodium and potassium ions across the plasma membrane. This action creates the electrochemical gradient of sodium and potassium ions, providing the energy for active transport of various nutrients. This chain is Sodium/potassium-transporting ATPase subunit alpha-2 (Atp1a2), found in Mus musculus (Mouse).